The following is a 328-amino-acid chain: Src kinase-associated phosphoprotein 2 (328 aa).

Positions 103–206 constitute a PH domain; the sequence is EYLRAGYLEK…WVNIIMNSRG (104 aa). The tract at residues 231-262 is disordered; the sequence is IYEELPEESEKPVTEIETPKATPVPVNNTSGK. A compositionally biased stretch (basic and acidic residues) spans 238–248; it reads ESEKPVTEIET. The SH3 domain occupies 266 to 327; sequence DYANFYRGLW…PKAYIMEMYD (62 aa).

This sequence belongs to the SKAP family. In terms of processing, phosphorylated on tyrosines.

Its subcellular location is the cytoplasm. May be involved in B-cell and macrophage adhesion processes. May play a role in src signaling pathway. In Xenopus tropicalis (Western clawed frog), this protein is Src kinase-associated phosphoprotein 2 (skap2).